Consider the following 1135-residue polypeptide: Envelopment polyprotein (1135 aa).

An N-terminal signal peptide occupies residues M1–A35. Topologically, residues K36–T314 are lumenal. The short motif at R41–D43 is the Cell attachment site element. N116 carries N-linked (GlcNAc...) asparagine; by host glycosylation. A disulfide bond links C122 and C156. Positions L177–L195 are non-covalent dimerization. N210 is a glycosylation site (N-linked (GlcNAc...) asparagine; by host). C224 and C285 are oxidised to a cystine. Residues A315–C366 traverse the membrane as a helical segment. At L367–S484 the chain is on the cytoplasmic side. Residues L437–S484 form a signal for signal peptide peptidase region. The Lumenal portion of the chain corresponds to K485–R1067. Residues N588, N605, and N980 are each glycosylated (N-linked (GlcNAc...) asparagine; by host). Residues V1068–I1088 traverse the membrane as a helical segment. The Cytoplasmic portion of the chain corresponds to C1089 to V1135.

The protein belongs to the tospovirus envelope glycoprotein family. In terms of assembly, homodimer; disulfide-linked. Heterodimer with Glycoprotein C. Interacts with nucleoprotein. Heterodimer with Glycoprotein N. Interacts with nucleoprotein. Specific enzymatic cleavages in vivo yield mature proteins including Glycoprotein N and Glycoprotein C. Post-translationally, glycosylated with O-linked glycans. Glycosylation is essential for proper subcellular location. In terms of processing, cleaved at acidic pH.

The protein resides in the virion membrane. It is found in the host Golgi apparatus membrane. It localises to the host endoplasmic reticulum membrane. Functionally, forms the spikes present at the surface of the virion together with Glycoprotein C. They are able to attach the virion to a cell receptor and to promote fusion of membranes after endocytosis of the virion. Plays a role in virus binding and/or entry into the vector midgut. Its function is as follows. Forms the spikes present at the surface of the virion together with Glycoprotein N. They are able to attach the virion to a cell receptor and to promote fusion of membranes after endocytosis of the virion. Probable class II fusion protein. In Frankliniella occidentalis (Western flower thrips), this protein is Envelopment polyprotein (GP).